The primary structure comprises 274 residues: NH(3)-dependent NAD(+) synthetase (274 aa).

46 to 53 (GISGGQDS) contributes to the ATP binding site. A Mg(2+)-binding site is contributed by aspartate 52. Arginine 140 provides a ligand contact to deamido-NAD(+). Threonine 160 provides a ligand contact to ATP. Glutamate 165 contacts Mg(2+). Residues lysine 173 and aspartate 180 each coordinate deamido-NAD(+). ATP is bound by residues lysine 189 and threonine 211. 260–261 (HK) serves as a coordination point for deamido-NAD(+).

This sequence belongs to the NAD synthetase family. Homodimer.

The catalysed reaction is deamido-NAD(+) + NH4(+) + ATP = AMP + diphosphate + NAD(+) + H(+). It participates in cofactor biosynthesis; NAD(+) biosynthesis; NAD(+) from deamido-NAD(+) (ammonia route): step 1/1. Catalyzes the ATP-dependent amidation of deamido-NAD to form NAD. Uses ammonia as a nitrogen source. This chain is NH(3)-dependent NAD(+) synthetase, found in Streptococcus pyogenes serotype M3 (strain ATCC BAA-595 / MGAS315).